The chain runs to 1253 residues: Cytoplasmic FMR1-interacting protein 1 homolog (1253 aa).

It belongs to the CYFIP family.

The protein resides in the cytoplasm. The protein localises to the perinuclear region. It is found in the cell projection. It localises to the lamellipodium. Its subcellular location is the ruffle. The protein resides in the synapse. The protein localises to the synaptosome. In terms of biological role, involved in formation of membrane ruffles and lamellipodia protrusions and in axon outgrowth. Binds to F-actin but not to RNA. In Danio rerio (Zebrafish), this protein is Cytoplasmic FMR1-interacting protein 1 homolog.